The following is a 363-amino-acid chain: Fructose-bisphosphate aldolase 1 (363 aa).

Aspartate 34 serves as a coordination point for dihydroxyacetone phosphate. The D-glyceraldehyde 3-phosphate site is built by serine 36 and threonine 39. Beta-D-fructose 1,6-bisphosphate is bound at residue arginine 43. Residue lysine 107 participates in D-glyceraldehyde 3-phosphate binding. Lysine 146 lines the dihydroxyacetone phosphate pocket. Position 189 (glutamate 189) interacts with D-glyceraldehyde 3-phosphate. The active-site Proton acceptor is glutamate 189. Lysine 231, serine 273, and glycine 274 together coordinate dihydroxyacetone phosphate. The active-site Schiff-base intermediate with dihydroxyacetone phosphate is the lysine 231. Beta-D-fructose 1,6-bisphosphate-binding positions include 273–275 (SGG) and serine 301. 2 residues coordinate dihydroxyacetone phosphate: glycine 303 and arginine 304. A beta-D-fructose 1,6-bisphosphate-binding site is contributed by arginine 304.

The protein belongs to the class I fructose-bisphosphate aldolase family. Homotetramer. Component of a complex, at least composed of ald-1, microneme protein MIC2 and ACT1. Interacts with microneme protein MIC2 (via cytoplasmic tail). Interacts with ACT1 (F-actin).

Its subcellular location is the cytoplasm. The catalysed reaction is beta-D-fructose 1,6-bisphosphate = D-glyceraldehyde 3-phosphate + dihydroxyacetone phosphate. The protein operates within carbohydrate degradation; glycolysis; D-glyceraldehyde 3-phosphate and glycerone phosphate from D-glucose: step 4/4. In terms of biological role, plays a key role in glycolysis by catalyzing the cleavage of fructose 1,6-bisphosphate into dihydroxyacetone phosphate and glyceraldehyde 3-phosphate. Forms a bridge between cell surface adhesins and the actin cytoskeleton. Required for parasite invasion of host cells. The polypeptide is Fructose-bisphosphate aldolase 1 (Toxoplasma gondii).